Reading from the N-terminus, the 250-residue chain is Flagellar L-ring protein (250 aa).

Residues 1 to 32 form the signal peptide; that stretch reads MTRINTNTQKNNNTKFSKLILGVMVSSIVLSG. Cysteine 33 carries the N-palmitoyl cysteine lipid modification. Residue cysteine 33 is the site of S-diacylglycerol cysteine attachment.

Belongs to the FlgH family. As to quaternary structure, the basal body constitutes a major portion of the flagellar organelle and consists of four rings (L,P,S, and M) mounted on a central rod.

It localises to the cell outer membrane. It is found in the bacterial flagellum basal body. Functionally, assembles around the rod to form the L-ring and probably protects the motor/basal body from shearing forces during rotation. This Hydrogenovibrio crunogenus (strain DSM 25203 / XCL-2) (Thiomicrospira crunogena) protein is Flagellar L-ring protein.